The chain runs to 906 residues: Translation initiation factor IF-2 (906 aa).

Disordered regions lie at residues 134–250 (RQRN…GSHV) and 269–317 (HLSA…FERP). A compositionally biased stretch (basic and acidic residues) spans 136-177 (RNLDEQQRLAESDRVRDEEIQRKRDEEQAAKDRAEAERKAAE). 2 stretches are compositionally biased toward low complexity: residues 178 to 232 (EAAA…STPA) and 287 to 305 (GRPGSSSSRRGNDNGRGSN). The region spanning 405 to 574 (TRPPVVTIMG…SLQAEVLELK (170 aa)) is the tr-type G domain. Residues 414–421 (GHVDHGKT) are G1. 414–421 (GHVDHGKT) is a binding site for GTP. Residues 439–443 (GITQH) are G2. Residues 460–463 (DTPG) form a G3 region. GTP contacts are provided by residues 460-464 (DTPGH) and 514-517 (NKID). The tract at residues 514–517 (NKID) is G4. The interval 550–552 (SAK) is G5.

This sequence belongs to the TRAFAC class translation factor GTPase superfamily. Classic translation factor GTPase family. IF-2 subfamily.

Its subcellular location is the cytoplasm. In terms of biological role, one of the essential components for the initiation of protein synthesis. Protects formylmethionyl-tRNA from spontaneous hydrolysis and promotes its binding to the 30S ribosomal subunits. Also involved in the hydrolysis of GTP during the formation of the 70S ribosomal complex. This is Translation initiation factor IF-2 from Xanthomonas oryzae pv. oryzae (strain MAFF 311018).